A 396-amino-acid chain; its full sequence is Elongation factor Tu (396 aa).

The tr-type G domain occupies 10-206 (KPHINVGTIG…ALDSYIPEPQ (197 aa)). Residues 19–26 (GHVDHGKT) form a G1 region. 19–26 (GHVDHGKT) contributes to the GTP binding site. Residue T26 coordinates Mg(2+). The interval 60–64 (GITIN) is G2. Residues 81–84 (DCPG) form a G3 region. GTP-binding positions include 81–85 (DCPGH) and 136–139 (NKAD). The segment at 136 to 139 (NKAD) is G4. The G5 stretch occupies residues 174–176 (SAL).

Belongs to the TRAFAC class translation factor GTPase superfamily. Classic translation factor GTPase family. EF-Tu/EF-1A subfamily. As to quaternary structure, monomer.

It is found in the cytoplasm. It catalyses the reaction GTP + H2O = GDP + phosphate + H(+). Its function is as follows. GTP hydrolase that promotes the GTP-dependent binding of aminoacyl-tRNA to the A-site of ribosomes during protein biosynthesis. The protein is Elongation factor Tu of Nitrosospira multiformis (strain ATCC 25196 / NCIMB 11849 / C 71).